A 180-amino-acid polypeptide reads, in one-letter code: Oligoribonuclease (180 aa).

One can recognise an Exonuclease domain in the interval 7–170; that stretch reads LIWIDLEMTG…DDIRESIAEL (164 aa). Tyr-128 is a catalytic residue.

It belongs to the oligoribonuclease family.

Its subcellular location is the cytoplasm. 3'-to-5' exoribonuclease specific for small oligoribonucleotides. The protein is Oligoribonuclease of Pseudomonas paraeruginosa (strain DSM 24068 / PA7) (Pseudomonas aeruginosa (strain PA7)).